We begin with the raw amino-acid sequence, 456 residues long: CBL-interacting serine/threonine-protein kinase 2 (456 aa).

Residues 12 to 266 form the Protein kinase domain; the sequence is YEVGRLLGQG…IAKIKESSWF (255 aa). ATP-binding positions include 18-26 and lysine 41; that span reads LGQGTFAKV. The Proton acceptor role is filled by aspartate 134. The tract at residues 152–181 is activation loop; that stretch reads DFGLSALADCKRQDGLLHTTCGTPAYVAPE. At serine 156 the chain carries Phosphoserine. At threonine 170 the chain carries Phosphothreonine. The tract at residues 280-309 is disordered; the sequence is MEKQQVREATNPMEAGGSGQNENGENHEPP. The NAF domain occupies 309–333; it reads PRLATLNAFDIIALSTGFGLAGLFG. The PPI stretch occupies residues 338-367; that stretch reads KRESRFASQKPASEIISKLVEVAKCLKLKI.

This sequence belongs to the protein kinase superfamily. CAMK Ser/Thr protein kinase family. SNF1 subfamily. Interacts with CBL2, CBL3 and CBL5. It depends on Mn(2+) as a cofactor.

It catalyses the reaction L-seryl-[protein] + ATP = O-phospho-L-seryl-[protein] + ADP + H(+). The catalysed reaction is L-threonyl-[protein] + ATP = O-phospho-L-threonyl-[protein] + ADP + H(+). Its function is as follows. CIPK serine-threonine protein kinases interact with CBL proteins. Binding of a CBL protein to the regulatory NAF domain of CIPK protein lead to the activation of the kinase in a calcium-dependent manner. This Arabidopsis thaliana (Mouse-ear cress) protein is CBL-interacting serine/threonine-protein kinase 2 (CIPK2).